Consider the following 564-residue polypeptide: Plant UBX domain-containing protein 8 (564 aa).

The residue at position 2 (Ala2) is an N-acetylalanine. A UBA-like domain is found at 2-44 (ATPNQEAIDTFISITGASDAVALQKLEEHRGDLNQAVNAYFSE). UIM domains follow at residues 198–217 (IEEE…AEGS) and 230–249 (EDDD…AEEE). Positions 210–229 (SKKEAEGSSNPLLEERPLHM) are disordered. Disordered stretches follow at residues 267–358 (AVTA…EEHD), 371–423 (IPET…DKEM), and 443–483 (FLEE…QADE). Positions 291-300 (FDDDSDDVDE) are enriched in acidic residues. Phosphoserine is present on residues Ser295, Ser324, Ser326, and Ser328. Basic and acidic residues predominate over residues 322-334 (DRSRSGSPEEEHA). Over residues 381 to 395 (FLPPQPRAQPRPPSP) the composition is skewed to pro residues. Residues 412 to 478 (VASLQADRDK…DAKEASLPKE (67 aa)) adopt a coiled-coil conformation. Over residues 443–475 (FLEEEKKKEEEAQRKLEEEQELERQLDAKEASL) the composition is skewed to basic and acidic residues. One can recognise a UBX domain in the interval 482 to 560 (DEENAITLLI…GLTSKQEALF (79 aa)).

Interacts with RABA5C/ARA-4.

This is Plant UBX domain-containing protein 8 from Arabidopsis thaliana (Mouse-ear cress).